Consider the following 351-residue polypeptide: Transmembrane protein 255A (351 aa).

The next 4 membrane-spanning stretches (helical) occupy residues 30–50, 57–77, 89–109, and 226–246; these read IYVTVTLLIVSMLILTVGLAA, VTVGGYYPGVILGFGSFLGII, LVASIVFISFGVIAAFCCAIV, and TILNIVGLFLGIITAAVLGGF. A disordered region spans residues 302–331; it reads FPSSPPSGLSDEQEPQSPSPSPSYMWSSSA.

It belongs to the TMEM255 family.

Its subcellular location is the membrane. The protein is Transmembrane protein 255A (Tmem255a) of Mus musculus (Mouse).